The primary structure comprises 198 residues: Dual specificity protein phosphatase 13B (198 aa).

Residues 45 to 193 (HINEVWPNLF…LQVLDNRLRR (149 aa)) enclose the Tyrosine-protein phosphatase domain. The active-site Phosphocysteine intermediate is the cysteine 138.

It belongs to the protein-tyrosine phosphatase family. Non-receptor class dual specificity subfamily. In terms of tissue distribution, most abundantly expressed in the testis.

It carries out the reaction O-phospho-L-tyrosyl-[protein] + H2O = L-tyrosyl-[protein] + phosphate. The enzyme catalyses O-phospho-L-seryl-[protein] + H2O = L-seryl-[protein] + phosphate. It catalyses the reaction O-phospho-L-threonyl-[protein] + H2O = L-threonyl-[protein] + phosphate. Dual specificity phosphatase that dephosphorylates MAPK8/JNK and MAPK14/p38, but not MAPK1/ERK2, in vitro. Exhibits intrinsic phosphatase activity towards both phospho-seryl/threonyl and -tyrosyl residues, with similar specific activities in vitro. In Mus musculus (Mouse), this protein is Dual specificity protein phosphatase 13B.